The chain runs to 449 residues: Putative BTB/POZ domain-containing protein L742 (449 aa).

In terms of domain architecture, BTB spans 79–148; it reads EDGYVYINIG…LTMSNQELSG (70 aa).

The protein belongs to the mimivirus BTB/WD family.

The sequence is that of Putative BTB/POZ domain-containing protein L742 from Acanthamoeba polyphaga mimivirus (APMV).